Consider the following 143-residue polypeptide: ATP synthase epsilon chain (143 aa).

It belongs to the ATPase epsilon chain family. As to quaternary structure, F-type ATPases have 2 components, CF(1) - the catalytic core - and CF(0) - the membrane proton channel. CF(1) has five subunits: alpha(3), beta(3), gamma(1), delta(1), epsilon(1). CF(0) has three main subunits: a, b and c.

It is found in the cell membrane. Functionally, produces ATP from ADP in the presence of a proton gradient across the membrane. The sequence is that of ATP synthase epsilon chain from Lacticaseibacillus casei (strain BL23) (Lactobacillus casei).